The following is a 346-amino-acid chain: Selenide, water dikinase (346 aa).

Residue selenocysteine 16 is part of the active site. Selenocysteine 16 is a non-standard amino acid (selenocysteine). ATP-binding positions include lysine 19 and 47-49; that span reads TAD. Aspartate 50 is a Mg(2+) binding site. ATP is bound by residues aspartate 67, aspartate 90, and 138–140; that span reads GHS. Mg(2+) is bound at residue aspartate 90. Residue aspartate 226 participates in Mg(2+) binding.

Belongs to the selenophosphate synthase 1 family. Class I subfamily. Homodimer. The cofactor is Mg(2+).

The catalysed reaction is hydrogenselenide + ATP + H2O = selenophosphate + AMP + phosphate + 2 H(+). Synthesizes selenophosphate from selenide and ATP. The sequence is that of Selenide, water dikinase from Haemophilus influenzae (strain ATCC 51907 / DSM 11121 / KW20 / Rd).